A 324-amino-acid chain; its full sequence is Methionyl-tRNA formyltransferase (324 aa).

113–116 serves as a coordination point for (6S)-5,6,7,8-tetrahydrofolate; the sequence is SLLP.

The protein belongs to the Fmt family.

The catalysed reaction is L-methionyl-tRNA(fMet) + (6R)-10-formyltetrahydrofolate = N-formyl-L-methionyl-tRNA(fMet) + (6S)-5,6,7,8-tetrahydrofolate + H(+). In terms of biological role, attaches a formyl group to the free amino group of methionyl-tRNA(fMet). The formyl group appears to play a dual role in the initiator identity of N-formylmethionyl-tRNA by promoting its recognition by IF2 and preventing the misappropriation of this tRNA by the elongation apparatus. The protein is Methionyl-tRNA formyltransferase of Bacteroides fragilis (strain ATCC 25285 / DSM 2151 / CCUG 4856 / JCM 11019 / LMG 10263 / NCTC 9343 / Onslow / VPI 2553 / EN-2).